The primary structure comprises 339 residues: Sphingomyelinase D (339 aa).

The signal sequence occupies residues 1 to 21 (MVSLLRLCSFLLAAGSILVQG). His-60 is an active-site residue. Mg(2+) is bound by residues Glu-80, Asp-82, and Asp-128. The short motif at 309 to 316 (ATVDDNPW) is the SMD-tail element. The disordered stretch occupies residues 313 to 339 (DNPWSSMSKKGSSKSSWVKGEVPSIAH). Over residues 317 to 328 (SSMSKKGSSKSS) the composition is skewed to low complexity.

The protein belongs to the sphingomyelinase D/phospholipase D family. The cofactor is Mg(2+).

The protein localises to the secreted. It carries out the reaction a sphingomyelin + H2O = an N-acylsphing-4-enine 1-phosphate + choline + H(+). Functionally, catalyzes the hydrolysis of sphingomyelin. Sphingomyelinases D are produced by some spider in their venoms, but also by arthropods such as ticks, or pathogenic bacteria and fungi. They might play a role in pathogenicity through different mechanisms, such as membrane destabilization and host cell penetration, but also pulmonary inflammation and cutaneous lesions. The protein is Sphingomyelinase D of Arthroderma benhamiae (strain ATCC MYA-4681 / CBS 112371) (Trichophyton mentagrophytes).